Reading from the N-terminus, the 938-residue chain is RIPOR family member 3 (938 aa).

A phosphoserine mark is found at Ser-9, Ser-24, and Ser-340. Thr-345 carries the post-translational modification Phosphothreonine. A phosphoserine mark is found at Ser-351 and Ser-384. Disordered stretches follow at residues 402-430 (EMDSFSSEDPRDTETSTSASTSDVGFLPV) and 579-603 (FGGSQAPERDSPPPPRPSLKVSPSE).

This sequence belongs to the RIPOR family.

In Mus musculus (Mouse), this protein is RIPOR family member 3.